We begin with the raw amino-acid sequence, 290 residues long: Cbb3-type cytochrome c oxidase subunit CcoP (290 aa).

The disordered stretch occupies residues 1 to 22; the sequence is MSVKPTKQKPGEPPTTGHSWDG. Residues 1–37 are Cytoplasmic-facing; that stretch reads MSVKPTKQKPGEPPTTGHSWDGIEEFDNPMPRWWLWT. The helical transmembrane segment at 38 to 58 threads the bilayer; that stretch reads FYVTIVWAIGYSILYPAWPLI. At 59–290 the chain is on the periplasmic side; it reads NGATNGLIGH…VYVHGLGGGE (232 aa). 2 Cytochrome c domains span residues 109–199 and 206–287; these read YATN…LQIS and ALSA…HGLG. Residues C122, C125, H126, M174, C219, C222, H223, and M264 each contribute to the heme c site.

It belongs to the CcoP / FixP family. Component of the cbb3-type cytochrome c oxidase at least composed of CcoN, CcoO, CcoQ and CcoP. Heme c serves as cofactor.

The protein resides in the cell inner membrane. It functions in the pathway energy metabolism; oxidative phosphorylation. Functionally, C-type cytochrome. Part of the cbb3-type cytochrome c oxidase complex. CcoP subunit is required for transferring electrons from donor cytochrome c via its heme groups to CcoO subunit. From there, electrons are shuttled to the catalytic binuclear center of CcoN subunit where oxygen reduction takes place. The complex also functions as a proton pump. The polypeptide is Cbb3-type cytochrome c oxidase subunit CcoP (Cereibacter sphaeroides (strain ATCC 17023 / DSM 158 / JCM 6121 / CCUG 31486 / LMG 2827 / NBRC 12203 / NCIMB 8253 / ATH 2.4.1.) (Rhodobacter sphaeroides)).